The sequence spans 649 residues: Flavin-dependent oxygenase ucdD (649 aa).

FAD contacts are provided by Q92, I185, Y344, D370, and S386.

It belongs to the PheA/TfdB FAD monooxygenase family. In terms of assembly, homodimer. Requires FAD as cofactor.

Its pathway is secondary metabolite biosynthesis. Its function is as follows. Nonribosomal peptide synthetase that mediates the biosynthesis of usterphenyllins and uscandidusins, p-terphenyl derivatives. Within the pathway, ucdD catalyzes the formation of 3,15-dihydroxyterphenyllin via dihydroxylation at C-3 of ring A and C-15 of ring C of the terphenyllin intermediate. The pathway begin with the biosynthesis of 4-hydroxyphenylpyruvate (HPPA) from L-tyrosine, possibly by the aminotransferase ucdG. The nonribosomal peptide synthetase ucdA then condenses two HPPA units to produce atromentin. The key step in this pathway is the reduction and dehydration of atromentin to form a terphenyl triol intermediate, performed by the NAD-dependent dehydrogenase ucdB. Further O-methylation by the methyltransferase ucdC forms terphenyllin carrying two methoxy moieties at C-9 and C-12, and subsequent dihydroxylation at C-3 of ring A and C-15 of ring C by the flavin-dependent oxygenase ucdD leads to 3,15-dihydroxyterphenyllin. Prenylation by ucdE at position C-5 of ring A forms usterphenyllin B, and is followed by a second prenylation at position C-14 of ring C to form usterphenyllin A. The following furan ring formation that leads to uscandidusins A and B was proven to be an unexpected spontaneous non-enzymatic reaction. The protein is Flavin-dependent oxygenase ucdD of Aspergillus ustus.